The chain runs to 230 residues: Ureidoacrylate amidohydrolase RutB (230 aa).

The active-site Proton acceptor is Asp24. The active site involves Lys133. Cys166 functions as the Nucleophile in the catalytic mechanism.

Belongs to the isochorismatase family. RutB subfamily.

The enzyme catalyses (Z)-3-ureidoacrylate + H2O + H(+) = (Z)-3-aminoacrylate + NH4(+) + CO2. It catalyses the reaction (Z)-3-ureidoacrylate + H2O = (Z)-3-aminoacrylate + carbamate + H(+). It carries out the reaction (Z)-2-methylureidoacrylate + H2O + H(+) = (Z)-2-methylaminoacrylate + NH4(+) + CO2. Hydrolyzes ureidoacrylate to form aminoacrylate and carbamate. The carbamate hydrolyzes spontaneously, thereby releasing one of the nitrogen atoms of the pyrimidine ring as ammonia and one of its carbon atoms as CO2. This is Ureidoacrylate amidohydrolase RutB from Escherichia coli O7:K1 (strain IAI39 / ExPEC).